The following is a 336-amino-acid chain: Torsin-1B (336 aa).

A signal peptide spans 1–24; that stretch reads MLRAGWLRGAAALALLLAARVVAA. The N-linked (GlcNAc...) asparagine glycan is linked to Asn64. 109 to 116 is an ATP binding site; sequence GWAGTGKN. The N-linked (GlcNAc...) asparagine glycan is linked to Asn165.

It belongs to the ClpA/ClpB family. Torsin subfamily. As to quaternary structure, homohexamer. Interacts with TOR1A; the interaction may be specific of neural tissues. Interacts with TOR1AIP1; TOR1AIP1 is required for TOR1B location on the nuclear membrane. Interacts (ATP-bound) with TOR1AIP2; important for endoplasmic reticulum integrity. N-glycosylated. As to expression, widely expressed with low levels in brain.

It is found in the endoplasmic reticulum lumen. It localises to the nucleus membrane. The catalysed reaction is ATP + H2O = ADP + phosphate + H(+). In terms of biological role, may serve as a molecular chaperone assisting in the proper folding of secreted and/or membrane proteins. Plays a role in non-neural cells nuclear envelope and endoplasmic reticulum integrity. May have a redundant function with TOR1A in non-neural tissues. The sequence is that of Torsin-1B (TOR1B) from Homo sapiens (Human).